A 375-amino-acid chain; its full sequence is Chaperone protein DnaJ (375 aa).

Residues 5 to 68 form the J domain; it reads DYYEILGVSK…KKRAQYDQFG (64 aa). Residues 135-217 form a CR-type zinc finger; it reads GISKNINYDR…CYGKKVINER (83 aa). Positions 148, 151, 165, 168, 191, 194, 205, and 208 each coordinate Zn(2+). CXXCXGXG motif repeat units lie at residues 148–155, 165–172, 191–198, and 205–212; these read CHKCQGTG, CTKCHGRG, CHECEGTG, and CEQCYGKK.

It belongs to the DnaJ family. Homodimer. Zn(2+) serves as cofactor.

The protein resides in the cytoplasm. In terms of biological role, participates actively in the response to hyperosmotic and heat shock by preventing the aggregation of stress-denatured proteins and by disaggregating proteins, also in an autonomous, DnaK-independent fashion. Unfolded proteins bind initially to DnaJ; upon interaction with the DnaJ-bound protein, DnaK hydrolyzes its bound ATP, resulting in the formation of a stable complex. GrpE releases ADP from DnaK; ATP binding to DnaK triggers the release of the substrate protein, thus completing the reaction cycle. Several rounds of ATP-dependent interactions between DnaJ, DnaK and GrpE are required for fully efficient folding. Also involved, together with DnaK and GrpE, in the DNA replication of plasmids through activation of initiation proteins. The polypeptide is Chaperone protein DnaJ (Ureaplasma parvum serovar 3 (strain ATCC 700970)).